A 423-amino-acid chain; its full sequence is COP9 signalosome complex subunit 3 (423 aa).

The PCI domain maps to 197-365; it reads NFERAMYFYE…GMVCFHDSPE (169 aa). Residues 401-410 show a composition bias toward polar residues; that stretch reads PQFVQKSMGS. The interval 401–423 is disordered; sequence PQFVQKSMGSQEDDSGSKPSSYS.

This sequence belongs to the CSN3 family. In terms of assembly, component of the CSN complex, probably composed of cops1, cops2, cops3, cops4, cops5, cops6, cops7, cops8 and cops9.

Its subcellular location is the cytoplasm. It localises to the nucleus. Component of the COP9 signalosome complex (CSN), a complex involved in various cellular and developmental processes. The CSN complex is an essential regulator of the ubiquitin (Ubl) conjugation pathway by mediating the deneddylation of the cullin subunits of E3 ligase complexes, leading to modify the Ubl ligase activity. This Xenopus laevis (African clawed frog) protein is COP9 signalosome complex subunit 3 (cops3).